Here is a 1176-residue protein sequence, read N- to C-terminus: MLRSISIASRAAGPVRPVARARTAVGVVAPPRVCCCAPAVGNYGQVDGKATLNSLRRLPAGYRPRSCPSSRSPDVKKVLVVGSGGLSIGQAGEFDYSGSQAIKALRESNIETILINPNIATIQTSHHLASEIYFLPVTADYVAYVLEKERPDGILLTFGGQSALNVGIQLEKMGVLERLGVQVLGTPIRTLEISEDRDLFVQALNEIDIPAAQSTAVSTIQDALDAAKTIGYPIILRSAFSLGGLGSFPHDEEELRNLAAKSLSLSPQVLIEKSLKGWKEVEYEVVRDAADNTIICCNMENFDPLGTHTGDSIVVAPSQTLTDEYHMLRSAAIKIVRHVGVVGECNVQYALDPNSRDYRVIEMNARLSRSSALASKATGYPLAYTAAKIALGHTLRELPNAVTKSTTACFEPSLDYIVTKIPKWDLAKFQHVERNVGSAMKSVGEVMAIGRTFEESLQKAIRQVDPNFAGFEAYWKPEDMITALTNNNDRRLFAIAHAMLNLDYSVDYLHDLTKIDKWFLYKLENIVAVHKQLRSTPFEQLDKELVMTAKKTGFSDLQIAQLTGKTEAEVRTLRKQFGVTPFVKRIDTLAAEFPAYTNYLYTSYNATTHDVKFDNGTMVLGSGVYRIGSSVEFDWCAVTCSRAIRDLGKKTIMINYNPETVSTDFDEADRLYFEELGFERVMDIYDLEGASGVVVSVGGQLPQNIALRLKKAGVQVLGTDPEMIDSAEDRHKFSSILDSIGVDQPAWTEASSLASAKEFANRVGYPVLIRPSYVLSGAAMNVVWDEAQLEHNLTLATNVSPDHPVVISQFIDNAQEIDVDAVAHKGKLLVHAVSEHVENAGVHSGDATLVLPPFSVNQHDLGRLKTIAEKVAQAFQISGPFNMQIIRKPPTGEEDAELKVIECNLRASRSFPFVSKVLGHNFIDTASAAIMDTNVPAPIDLMAQKRDYVAIKVPQFSWTRLPGADPFLGVEMASTGEVASFGKDIYDAYWAALLSVNGMKLPKANSGILLGGDITRPEMTEVAKNLINLGFSLYTYDPKVEAHINDQPYLSIKKILVPVKDKKKLREILEEHEIQTVINMARSRAATTLDEDYAARRAAVDFGIPLINNPKLAVLFTETLEKKFVKNNPIPYSEGFKPSEVGSWRDFVGEAATTKLEGIAWTGEAYCIILIPGIGV.

Residues 1–11 (MLRSISIASRA) constitute a mitochondrion transit peptide. The segment at 70 to 465 (SRSPDVKKVL…SLQKAIRQVD (396 aa)) is carboxyphosphate synthetic domain. ATP contacts are provided by Arg197, Arg237, Gly243, Gly244, Lys273, Leu275, Glu280, Gly306, Thr307, His308, Gln348, and Glu362. The 191-residue stretch at 201-391 (VQALNEIDIP…LAYTAAKIAL (191 aa)) folds into the ATP-grasp 1 domain. Mg(2+) contacts are provided by Gln348, Glu362, and Asn364. Mn(2+) is bound by residues Gln348, Glu362, and Asn364. The interval 466–610 (PNFAGFEAYW…YTSYNATTHD (145 aa)) is oligomerization domain. The interval 611 to 997 (VKFDNGTMVL…AYWAALLSVN (387 aa)) is carbamoyl phosphate synthetic domain. The ATP-grasp 2 domain maps to 734–931 (SSILDSIGVD…FIDTASAAIM (198 aa)). 10 residues coordinate ATP: Arg770, Gln809, Ile811, Glu816, Gly841, Val842, His843, Ser844, Gln884, and Glu902. Gln884, Glu902, and Asn904 together coordinate Mg(2+). Residues Gln884, Glu902, and Asn904 each coordinate Mn(2+). Residues 998–1137 (GMKLPKANSG…NPIPYSEGFK (140 aa)) are allosteric domain. Residues 999 to 1154 (MKLPKANSGI…RDFVGEAATT (156 aa)) enclose the MGS-like domain.

Belongs to the CarB family. In terms of assembly, heterodimer composed of 2 chains; the small (or glutamine) chain promotes the hydrolysis of glutamine to ammonia, which is used by the large (or ammonia) chain to synthesize carbamoyl phosphate. Requires Mg(2+) as cofactor. It depends on Mn(2+) as a cofactor.

It localises to the mitochondrion. It carries out the reaction hydrogencarbonate + L-glutamine + 2 ATP + H2O = carbamoyl phosphate + L-glutamate + 2 ADP + phosphate + 2 H(+). It catalyses the reaction hydrogencarbonate + NH4(+) + 2 ATP = carbamoyl phosphate + 2 ADP + phosphate + 2 H(+). It functions in the pathway amino-acid biosynthesis; L-arginine biosynthesis; carbamoyl phosphate from bicarbonate: step 1/1. In terms of biological role, large subunit of the arginine-specific carbamoyl phosphate synthase (CPSase). CPSase catalyzes the formation of carbamoyl phosphate from the ammonia moiety of glutamine, hydrogencarbonate, and phosphate donated by ATP, constituting the first step of 2 biosynthetic pathways, one leading to arginine and/or urea and the other to pyrimidine nucleotides. The large subunit (synthetase) binds the substrates ammonia (free or transferred from glutamine from the small subunit), hydrogencarbonate and ATP and carries out an ATP-coupled ligase reaction, activating hydrogencarbonate by forming carboxy phosphate which reacts with ammonia to form carbamoyl phosphate. In Cutaneotrichosporon cutaneum (Yeast), this protein is Carbamoyl phosphate synthase arginine-specific large chain (argA).